A 188-amino-acid chain; its full sequence is Nicotinamide-nucleotide adenylyltransferase (188 aa).

The disordered stretch occupies residues serine 166–aspartate 188.

This sequence belongs to the archaeal NMN adenylyltransferase family.

Its subcellular location is the cytoplasm. It carries out the reaction beta-nicotinamide D-ribonucleotide + ATP + H(+) = diphosphate + NAD(+). Its pathway is cofactor biosynthesis; NAD(+) biosynthesis; NAD(+) from nicotinamide D-ribonucleotide: step 1/1. In Haloarcula marismortui (strain ATCC 43049 / DSM 3752 / JCM 8966 / VKM B-1809) (Halobacterium marismortui), this protein is Nicotinamide-nucleotide adenylyltransferase.